A 448-amino-acid chain; its full sequence is 4-hydroxybenzoate transporter PcaK (448 aa).

Topologically, residues 1 to 30 are cytoplasmic; that stretch reads MNQAQNSVGKSLDVQSFINQQPLSRYQWRV. The chain crosses the membrane as a helical span at residues 31–51; sequence VLLCFLIVFLDGLDTAAMGFI. At 52 to 67 the chain is on the periplasmic side; that stretch reads APALSQEWGIDRASLG. Residues 68–88 form a helical membrane-spanning segment; the sequence is PVMSAALIGMVFGALGSGPLA. At 89–94 the chain is on the cytoplasmic side; sequence DRFGRK. A helical membrane pass occupies residues 95 to 115; that stretch reads GVLVGAVLVFGGFSLASAYAT. Residues 116–119 are Periplasmic-facing; it reads NVDQ. Residues 120–140 form a helical membrane-spanning segment; the sequence is LLVLRFLTGLGLGAGMPNATT. At 141 to 152 the chain is on the cytoplasmic side; it reads LLSEYTPERLKS. Residues 153-173 form a helical membrane-spanning segment; sequence LLVTSMFCGFNLGMAGGGFIS. Residues 174–184 lie on the Periplasmic side of the membrane; it reads AKMIPAYGWHS. A helical membrane pass occupies residues 185–205; that stretch reads LLVIGGVLPLLLALVLMVWLP. The Cytoplasmic portion of the chain corresponds to 206–261; the sequence is ESARFLVVRNRGTDKIRKTLSPIAPQVVAEAGSFSVPEQKAVAARSVFAVIFSGTY. A helical membrane pass occupies residues 262–282; that stretch reads GLGTMLLWLTYFMGLVIVYLL. Residues 283–301 lie on the Periplasmic side of the membrane; the sequence is TSWLPTLMRDSGASMEQAA. Residues 302–322 form a helical membrane-spanning segment; the sequence is FIGALFQFGGVLSAVGVGWAM. Residues 323 to 329 lie on the Cytoplasmic side of the membrane; it reads DRYNPHK. A helical transmembrane segment spans residues 330–350; it reads VIGIFYLLAGVFAYAVGQSLG. A topological domain (periplasmic) is located at residue asparagine 351. The chain crosses the membrane as a helical span at residues 352 to 372; that stretch reads ITVLATLVLIAGMCVNGAQSA. The Cytoplasmic portion of the chain corresponds to 373 to 398; sequence MPSLAARFYPTQGRATGVSWMLGIGR. Residues 399–419 form a helical membrane-spanning segment; it reads FGAILGAWSGATLLGLGWNFE. Over 420–421 the chain is Periplasmic; it reads QV. Residues 422–442 form a helical membrane-spanning segment; sequence LTALLVPAALATVGVIVKGLV. Over 443-448 the chain is Cytoplasmic; that stretch reads SHADAT.

This sequence belongs to the major facilitator superfamily. Aromatic acid:H(+) symporter (AAHS) (TC 2.A.1.15) family.

It localises to the cell inner membrane. Its function is as follows. Transports 4-hydroxybenzoate (4-HBA) and protocatechuate across the membrane. Driven by the proton motive force. Also functions as a chemoreceptor, which is required for chemotaxis to aromatic acids. The chain is 4-hydroxybenzoate transporter PcaK (pcaK) from Pseudomonas putida (Arthrobacter siderocapsulatus).